A 202-amino-acid chain; its full sequence is Thymidylate kinase (202 aa).

7 to 14 (GIDGSGKT) provides a ligand contact to ATP.

Belongs to the thymidylate kinase family.

The enzyme catalyses dTMP + ATP = dTDP + ADP. Its function is as follows. Phosphorylation of dTMP to form dTDP in both de novo and salvage pathways of dTTP synthesis. This Ehrlichia ruminantium (strain Gardel) protein is Thymidylate kinase.